A 123-amino-acid polypeptide reads, in one-letter code: ATP synthase epsilon chain (123 aa).

The protein belongs to the ATPase epsilon chain family. As to quaternary structure, F-type ATPases have 2 components, CF(1) - the catalytic core - and CF(0) - the membrane proton channel. CF(1) has five subunits: alpha(3), beta(3), gamma(1), delta(1), epsilon(1). CF(0) has three main subunits: a, b and c.

It is found in the cell inner membrane. Its function is as follows. Produces ATP from ADP in the presence of a proton gradient across the membrane. The sequence is that of ATP synthase epsilon chain (atpC) from Helicobacter pylori (strain ATCC 700392 / 26695) (Campylobacter pylori).